Consider the following 351-residue polypeptide: Histidinol-phosphate aminotransferase (351 aa).

The residue at position 221 (K221) is an N6-(pyridoxal phosphate)lysine.

It belongs to the class-II pyridoxal-phosphate-dependent aminotransferase family. Histidinol-phosphate aminotransferase subfamily. In terms of assembly, homodimer. It depends on pyridoxal 5'-phosphate as a cofactor.

It catalyses the reaction L-histidinol phosphate + 2-oxoglutarate = 3-(imidazol-4-yl)-2-oxopropyl phosphate + L-glutamate. It functions in the pathway amino-acid biosynthesis; L-histidine biosynthesis; L-histidine from 5-phospho-alpha-D-ribose 1-diphosphate: step 7/9. The polypeptide is Histidinol-phosphate aminotransferase (Staphylococcus epidermidis (strain ATCC 12228 / FDA PCI 1200)).